The sequence spans 222 residues: Twisted gastrulation protein homolog 1 (222 aa).

The signal sequence occupies residues 1–24 (MKSHYIVLALASLTFLLCLPVSQS). 2 N-linked (GlcNAc...) asparagine glycosylation sites follow: Asn-80 and Asn-146.

It belongs to the twisted gastrulation protein family. As to quaternary structure, interacts with CHRD and/or BMP4. This interaction enhances CHRD/BMP4 complex formation. Interacts with BMP7. Expressed in lymph node, liver, kidney, and lung. Expression in the kidney was stronger in the medulla than in the cortex, particularly in the cells surrounding the medullary tubules. Expressed in growth plate cartilage of long bones, ribs, and digits and to a lesser extent also in the resting zone of the epiphysis, trabecular bone, and vertebral cartilage. Expression seems to be absent from other skeletal tissues including muscle, skin, and fibroblasts.

It is found in the secreted. Functionally, may be involved in dorsoventral axis formation. Seems to antagonize BMP signaling by forming ternary complexes with CHRD and BMPs, thereby preventing BMPs from binding to their receptors. In addition to the anti-BMP function, also has pro-BMP activity, partly mediated by cleavage and degradation of CHRD, which releases BMPs from ternary complexes. May be an important modulator of BMP-regulated cartilage development and chondrocyte differentiation. May play a role in thymocyte development. This is Twisted gastrulation protein homolog 1 (Twsg1) from Mus musculus (Mouse).